Here is a 494-residue protein sequence, read N- to C-terminus: Glycerol kinase (494 aa).

Position 13 (threonine 13) interacts with ADP. Threonine 13, threonine 14, and serine 15 together coordinate ATP. Threonine 13 contacts sn-glycerol 3-phosphate. An ADP-binding site is contributed by arginine 17. 4 residues coordinate sn-glycerol 3-phosphate: arginine 83, glutamate 84, tyrosine 135, and aspartate 244. Glycerol is bound by residues arginine 83, glutamate 84, tyrosine 135, aspartate 244, and glutamine 245. Residues threonine 266 and glycine 309 each coordinate ADP. Threonine 266, glycine 309, glutamine 313, and glycine 410 together coordinate ATP. Residues glycine 410 and asparagine 414 each contribute to the ADP site.

This sequence belongs to the FGGY kinase family.

It carries out the reaction glycerol + ATP = sn-glycerol 3-phosphate + ADP + H(+). It participates in polyol metabolism; glycerol degradation via glycerol kinase pathway; sn-glycerol 3-phosphate from glycerol: step 1/1. With respect to regulation, inhibited by fructose 1,6-bisphosphate (FBP). Key enzyme in the regulation of glycerol uptake and metabolism. Catalyzes the phosphorylation of glycerol to yield sn-glycerol 3-phosphate. The chain is Glycerol kinase from Shewanella sp. (strain ANA-3).